Here is a 383-residue protein sequence, read N- to C-terminus: NIPA-like protein 2 (383 aa).

Asparagine 23 and asparagine 33 each carry an N-linked (GlcNAc...) asparagine glycan. 7 consecutive transmembrane segments (helical) span residues 46-66 (IHLF…ISLN), 88-108 (VLWW…FAAY), 110-130 (FAPI…SAII), 144-164 (LLGT…APNI), 177-197 (LVGW…CILL), 209-229 (VILL…VKAV), and 243-263 (LTYP…VFQV). Asparagine 274 carries N-linked (GlcNAc...) asparagine glycosylation. Transmembrane regions (helical) follow at residues 278–298 (VVPV…IIFY) and 306–326 (FLTV…VFLV). Residues 355–383 (QPDSHSLSYGTLPDGSDSTKSQSGEKKEV) are disordered.

This sequence belongs to the NIPA family.

The protein localises to the membrane. The polypeptide is NIPA-like protein 2 (NIPAL2) (Homo sapiens (Human)).